The chain runs to 335 residues: Expansin-like protein 3 (335 aa).

The first 20 residues, 1-20, serve as a signal peptide directing secretion; sequence MKFNTIFLVLSIVKFILISA. At 21–314 the chain is on the extracellular side; that stretch reads QSCPFSQSII…LNENENIESN (294 aa). An Expansin-like EG45 domain is found at 43-143; it reads AGNCGFEKLN…VKVPCEVSGN (101 aa). Intrachain disulfides connect Cys46–Cys76 and Cys79–Cys138. A glycan (N-linked (GlcNAc...) asparagine) is linked at Asn87. A disordered region spans residues 247–276; it reads YKPQTFNSQQTSNNQNSNTQTPTKQPSPNS. Residues 249 to 272 are compositionally biased toward low complexity; the sequence is PQTFNSQQTSNNQNSNTQTPTKQP. The chain crosses the membrane as a helical span at residues 315-335; it reads SLKLLPNFLLLILIILLNINF.

It belongs to the expansin family. Expansin A subfamily.

It localises to the membrane. Its function is as follows. May serve to lubricate the movement of the cellulose microfibrils during cell growth and wall extension and/or may serve to maintain the fluid state of the slug cell wall. The sequence is that of Expansin-like protein 3 (expl3) from Dictyostelium discoideum (Social amoeba).